A 290-amino-acid polypeptide reads, in one-letter code: Nucleotide-binding protein XF_1405 (290 aa).

13–20 lines the ATP pocket; the sequence is GLSGSGKS. Position 65–68 (65–68) interacts with GTP; the sequence is DIRS.

It belongs to the RapZ-like family.

In terms of biological role, displays ATPase and GTPase activities. This is Nucleotide-binding protein XF_1405 from Xylella fastidiosa (strain 9a5c).